A 191-amino-acid chain; its full sequence is Probable GTP-binding protein EngB (191 aa).

In terms of domain architecture, EngB-type G spans 22-191; that stretch reads DFDHFLILGR…KLINEEFSNE (170 aa). GTP contacts are provided by residues 30 to 37, 57 to 61, 75 to 78, 142 to 145, and 172 to 174; these read GRSNVGKS, GKTIT, DAPG, TKYD, and TSS. Mg(2+) contacts are provided by serine 37 and threonine 59.

This sequence belongs to the TRAFAC class TrmE-Era-EngA-EngB-Septin-like GTPase superfamily. EngB GTPase family. Mg(2+) serves as cofactor.

Functionally, necessary for normal cell division and for the maintenance of normal septation. The sequence is that of Probable GTP-binding protein EngB from Acholeplasma laidlawii (strain PG-8A).